Here is a 325-residue protein sequence, read N- to C-terminus: NADH-quinone oxidoreductase subunit H (325 aa).

8 consecutive transmembrane segments (helical) span residues 11–31, 81–101, 114–134, 154–174, 186–206, 237–257, 265–285, and 304–324; these read ILLSILKAVVILLVVVTCGAF, VIFTLAPMIAFTSLLLAFAIV, IGILFFLMMAGLAVYAVLFAG, LSYEVFLGLSLMGVVAQAGSF, IWNVIPQFFGFVTFAIAGVAV, FFVGEYIGIVTISALMVTLFF, LPPFIWFALKTAFFMMMFILI, and VCLPLTLVNLLVTAAVILWQA.

It belongs to the complex I subunit 1 family. In terms of assembly, NDH-1 is composed of 13 different subunits. Subunits NuoA, H, J, K, L, M, N constitute the membrane sector of the complex.

It is found in the cell inner membrane. The catalysed reaction is a quinone + NADH + 5 H(+)(in) = a quinol + NAD(+) + 4 H(+)(out). Functionally, NDH-1 shuttles electrons from NADH, via FMN and iron-sulfur (Fe-S) centers, to quinones in the respiratory chain. The immediate electron acceptor for the enzyme in this species is believed to be ubiquinone. Couples the redox reaction to proton translocation (for every two electrons transferred, four hydrogen ions are translocated across the cytoplasmic membrane), and thus conserves the redox energy in a proton gradient. This subunit may bind ubiquinone. The protein is NADH-quinone oxidoreductase subunit H of Enterobacter sp. (strain 638).